The primary structure comprises 716 residues: Forkhead box protein P2 (716 aa).

Residues 1–28 (MMQESATETISNSSMNQNGMSTLSSQLD) are compositionally biased toward polar residues. 2 disordered regions span residues 1-45 (MMQE…SEVS) and 286-340 (KHGG…TGAS). The span at 293–306 (TTNNSSSTTSSTTS) shows a compositional bias: low complexity. The span at 316 to 325 (SIVNGQSSVL) shows a compositional bias: polar residues. Residues 327-338 (ARRDSSSHEETG) are compositionally biased toward basic and acidic residues. The C2H2-type zinc-finger motif lies at 347 to 372 (GVCKWPGCESICEDFGQFLKHLNNEH). Residues 389–410 (VQQLEIQLSKERERLQAMMTHL) are leucine-zipper. The tract at residues 423-427 (PLNLV) is CTBP1-binding. Residues 439–460 (TSPQSLPQTPTTPTAPVTPITQ) show a composition bias toward low complexity. The tract at residues 439–466 (TSPQSLPQTPTTPTAPVTPITQGPSVIT) is disordered. A DNA-binding region (fork-head) is located at residues 505–595 (RPPFTYATLI…SQKITGSPTL (91 aa)). Disordered stretches follow at residues 650 to 669 (LDHI…QPHI) and 679 to 716 (VIAE…EDLE). Positions 700 to 716 (LEDDREIEEEPLSEDLE) are enriched in acidic residues.

As to quaternary structure, forms homodimers and heterodimers with FOXP1 and FOXP4. Dimerization is required for DNA-binding. Interacts with CTBP1. Interacts with FOXP1. Interacts with TBR1. Interacts with ZMYM2.

It is found in the nucleus. Its function is as follows. Transcriptional repressor that may play a role in the specification and differentiation of lung epithelium. May also play a role in developing neural, gastrointestinal and cardiovascular tissues. Can act with CTBP1 to synergistically repress transcription but CTPBP1 is not essential. Plays a role in synapse formation by regulating SRPX2 levels. This chain is Forkhead box protein P2 (FOXP2), found in Pan paniscus (Pygmy chimpanzee).